A 429-amino-acid chain; its full sequence is Histidine--tRNA ligase (429 aa).

This sequence belongs to the class-II aminoacyl-tRNA synthetase family. In terms of assembly, homodimer.

It localises to the cytoplasm. The catalysed reaction is tRNA(His) + L-histidine + ATP = L-histidyl-tRNA(His) + AMP + diphosphate + H(+). This is Histidine--tRNA ligase from Streptococcus pneumoniae serotype 19F (strain G54).